The sequence spans 155 residues: Small ribosomal subunit protein uS7 (155 aa).

The protein belongs to the universal ribosomal protein uS7 family. In terms of assembly, part of the 30S ribosomal subunit. Contacts proteins S9 and S11.

Functionally, one of the primary rRNA binding proteins, it binds directly to 16S rRNA where it nucleates assembly of the head domain of the 30S subunit. Is located at the subunit interface close to the decoding center, probably blocks exit of the E-site tRNA. The protein is Small ribosomal subunit protein uS7 of Desulforapulum autotrophicum (strain ATCC 43914 / DSM 3382 / VKM B-1955 / HRM2) (Desulfobacterium autotrophicum).